We begin with the raw amino-acid sequence, 276 residues long: Shikimate dehydrogenase (NADP(+)) (276 aa).

Shikimate-binding positions include 15–17 and T62; that span reads SKS. Residue K66 is the Proton acceptor of the active site. E78 serves as a coordination point for NADP(+). The shikimate site is built by N87 and D103. NADP(+) contacts are provided by residues 128-132 and I217; that span reads GAGGA. Residue Y219 participates in shikimate binding. Residue G240 participates in NADP(+) binding.

It belongs to the shikimate dehydrogenase family. Homodimer.

It catalyses the reaction shikimate + NADP(+) = 3-dehydroshikimate + NADPH + H(+). The protein operates within metabolic intermediate biosynthesis; chorismate biosynthesis; chorismate from D-erythrose 4-phosphate and phosphoenolpyruvate: step 4/7. Its function is as follows. Involved in the biosynthesis of the chorismate, which leads to the biosynthesis of aromatic amino acids. Catalyzes the reversible NADPH linked reduction of 3-dehydroshikimate (DHSA) to yield shikimate (SA). In Lysinibacillus sphaericus (strain C3-41), this protein is Shikimate dehydrogenase (NADP(+)).